The chain runs to 129 residues: Small ribosomal subunit protein uS9 (129 aa).

The protein belongs to the universal ribosomal protein uS9 family.

The chain is Small ribosomal subunit protein uS9 from Helicobacter acinonychis (strain Sheeba).